Here is a 291-residue protein sequence, read N- to C-terminus: Tyrosine-protein kinase PtkA (291 aa).

The interval 1 to 79 (MSSPRERRPA…RRASSPGESP (79 aa)) is disordered. The span at 23–60 (HQTSRSSPDTTAPTGSGLSNRFVNDNGIVTDTTASGTN) shows a compositional bias: polar residues. The residue at position 262 (tyrosine 262) is a Phosphotyrosine.

The protein belongs to the HAD-like hydrolase superfamily. CbbY/CbbZ/Gph/YieH family. In terms of assembly, interacts with PtpA. Autophosphorylated.

It catalyses the reaction L-tyrosyl-[protein] + ATP = O-phospho-L-tyrosyl-[protein] + ADP + H(+). In terms of biological role, required for growth within macrophages. Catalyzes the phosphorylation of PtpA on the tyrosine residues at positions 128 and 129, thereby increasing PtpA phosphatase activity and promoting pathogenicity. This Mycobacterium bovis (strain ATCC BAA-935 / AF2122/97) protein is Tyrosine-protein kinase PtkA.